Consider the following 295-residue polypeptide: Cytidine deaminase (295 aa).

CMP/dCMP-type deaminase domains are found at residues 48–168 (SDKE…FGPA) and 187–295 (DDKD…FVNV). A substrate-binding site is contributed by 89–91 (NME). Zn(2+) is bound at residue His-102. Glu-104 serves as the catalytic Proton donor. Residues Cys-129 and Cys-132 each contribute to the Zn(2+) site.

This sequence belongs to the cytidine and deoxycytidylate deaminase family. As to quaternary structure, homodimer. Requires Zn(2+) as cofactor.

It carries out the reaction cytidine + H2O + H(+) = uridine + NH4(+). The catalysed reaction is 2'-deoxycytidine + H2O + H(+) = 2'-deoxyuridine + NH4(+). This enzyme scavenges exogenous and endogenous cytidine and 2'-deoxycytidine for UMP synthesis. The protein is Cytidine deaminase of Vibrio parahaemolyticus serotype O3:K6 (strain RIMD 2210633).